We begin with the raw amino-acid sequence, 834 residues long: Phenylalanine--tRNA ligase beta subunit (834 aa).

The tRNA-binding domain maps to 48 to 159 (GDIERPLVVG…GTAEPGTDAN (112 aa)). One can recognise a B5 domain in the interval 411 to 492 (PAPEPIRMDI…RLEGLEQIPS (82 aa)). Mg(2+) contacts are provided by D470, D476, E479, and E480. Residues 740–833 (SPFPAVLQDV…AADAVGAVLR (94 aa)) form the FDX-ACB domain.

The protein belongs to the phenylalanyl-tRNA synthetase beta subunit family. Type 1 subfamily. As to quaternary structure, tetramer of two alpha and two beta subunits. Mg(2+) is required as a cofactor.

It is found in the cytoplasm. The enzyme catalyses tRNA(Phe) + L-phenylalanine + ATP = L-phenylalanyl-tRNA(Phe) + AMP + diphosphate + H(+). The polypeptide is Phenylalanine--tRNA ligase beta subunit (Nocardia farcinica (strain IFM 10152)).